The sequence spans 291 residues: 4-hydroxy-tetrahydrodipicolinate synthase (291 aa).

Position 47 (T47) interacts with pyruvate. The active-site Proton donor/acceptor is Y136. The Schiff-base intermediate with substrate role is filled by K164. I206 contributes to the pyruvate binding site.

It belongs to the DapA family. As to quaternary structure, homotetramer; dimer of dimers.

The protein resides in the cytoplasm. It catalyses the reaction L-aspartate 4-semialdehyde + pyruvate = (2S,4S)-4-hydroxy-2,3,4,5-tetrahydrodipicolinate + H2O + H(+). The protein operates within amino-acid biosynthesis; L-lysine biosynthesis via DAP pathway; (S)-tetrahydrodipicolinate from L-aspartate: step 3/4. Its function is as follows. Catalyzes the condensation of (S)-aspartate-beta-semialdehyde [(S)-ASA] and pyruvate to 4-hydroxy-tetrahydrodipicolinate (HTPA). The sequence is that of 4-hydroxy-tetrahydrodipicolinate synthase from Leuconostoc citreum (strain KM20).